Consider the following 134-residue polypeptide: uncharacterized protein (134 aa).

The protein to E.coli YbcV and YdfO.

This is an uncharacterized protein from Escherichia coli (strain K12).